The following is a 252-amino-acid chain: Type IV pilus assembly protein PilF (252 aa).

The signal sequence occupies residues 1-17; sequence MTVRAALVFLLAVGLTG. Cys18 carries the N-palmitoyl cysteine lipid modification. Cys18 is lipidated: S-diacylglycerol cysteine. TPR repeat units lie at residues 32–67, 84–101, 104–133, 139–171, 174–203, and 208–235; these read GRDE…LEID, EMEP…LASD, NARV…EASQ, ERSR…LRLN, QPSV…LFAQ, and NARS…GLQL.

In terms of assembly, interacts with PilQ; this interaction is essential for assemby of PilQ into secretins.

It is found in the cell outer membrane. Functionally, essential component of the type IV pilus (T4P) that plays a role in surface and host cell adhesion, colonization, biofilm maturation, virulence, and twitching, a form of surface-associated motility facilitated by cycles of extension, adhesion, and retraction of T4P fibers. Plays an essential role in the outer membrane localization and assembly of PilQ into secretins which are dodecamers of PilQ. The chain is Type IV pilus assembly protein PilF (pilF) from Pseudomonas aeruginosa (strain ATCC 15692 / DSM 22644 / CIP 104116 / JCM 14847 / LMG 12228 / 1C / PRS 101 / PAO1).